A 301-amino-acid chain; its full sequence is UstYa family oxidase phomYd (301 aa).

The disordered stretch occupies residues 1 to 26 (MEKFFSPSRHNYADLSPTDVPASEES). A helical membrane pass occupies residues 47-69 (VLVNRLLAASTVALVMVSLWLGW). Short sequence motifs (HXXHC) lie at residues 189–194 (THSVHC) and 218–222 (HTDHC). A glycan (N-linked (GlcNAc...) asparagine) is linked at Asn275.

It belongs to the ustYa family.

It localises to the membrane. It participates in mycotoxin biosynthesis. In terms of biological role, ustYa family oxidase; part of the gene cluster that mediates the biosynthesis of the phomopsins, a group of hexapeptide mycotoxins which infects lupins and causes lupinosis disease in livestock. Within the pathway, phomYd catalyzes the desaturation of the Asp moiety into 2,3-dehydroaspartic acid (dAsp). The pathway starts with the processing of the precursor phomA by several endopeptidases including kexin proteases as well as the cluster-specific S41 family peptidase phomP1 and the oligopeptidase phomG to produce 10 identical copies of the hexapeptide Tyr-Val-Ile-Pro-Ile-Asp. After being excised from the precursor peptide, the core peptides are cyclized and modified post-translationally by enzymes encoded within the gene cluster. The timing and order of proteolysis of the phomA precursor and PTMs are still unknown. Two tyrosinase-like enzymes, phomQ1 and phomQ2, catalyze the chlorination and hydroxylation of Tyr, respectively. PhomYb, is proposed to be involved in the construction of the macrocyclic structure. The other 4 ustYa family proteins may be involved in PTMs that generate the unique structure of phomopsin A. PhomYa is required for the hydroxylation of C-beta of Tyr. PhomYc, phomYd, and phomYe are responsible for the biosynthesis of 2,3-dehydroisoleucine (dIle), 2,3-dehydroaspartic acid (dAsp), and 3,4-dehydroproline (dPro), respectively. While dIle formation by phomYc is indispensable for the installation of dAsp by phomYd, the order of the other PTMs have not been elucidated yet. Most of the biosynthetic enzymes likely have broad substrate specificity, and thus, there might be a metabolic grid from a precursor to phomopsin A. The enzyme(s) responsible for the biosynthesis of 3,4-dehydrovaline (dVal) have also not been identified yet. Finally, phomM acts as an S-adenosylmethionine-dependent alpha-N-methyltransferase that catalyzes two successive N-methylation reactions, converting N-desmethyl-phomopsin A to phomopsin A and phomopsin A further to an N,N-dimethylated congener called phomopsin E. This chain is UstYa family oxidase phomYd, found in Diaporthe leptostromiformis (Lupinosis disease fungus).